The primary structure comprises 337 residues: tRNA N6-adenosine threonylcarbamoyltransferase (337 aa).

Fe cation-binding residues include His-111 and His-115. Substrate-binding positions include 134 to 138 (LVSGG), Asp-167, Gly-180, and Asn-272. Asp-300 is a Fe cation binding site.

The protein belongs to the KAE1 / TsaD family. Requires Fe(2+) as cofactor.

The protein resides in the cytoplasm. The enzyme catalyses L-threonylcarbamoyladenylate + adenosine(37) in tRNA = N(6)-L-threonylcarbamoyladenosine(37) in tRNA + AMP + H(+). Functionally, required for the formation of a threonylcarbamoyl group on adenosine at position 37 (t(6)A37) in tRNAs that read codons beginning with adenine. Is involved in the transfer of the threonylcarbamoyl moiety of threonylcarbamoyl-AMP (TC-AMP) to the N6 group of A37, together with TsaE and TsaB. TsaD likely plays a direct catalytic role in this reaction. This Photorhabdus laumondii subsp. laumondii (strain DSM 15139 / CIP 105565 / TT01) (Photorhabdus luminescens subsp. laumondii) protein is tRNA N6-adenosine threonylcarbamoyltransferase.